The sequence spans 456 residues: Alcohol acyltransferase 16 (456 aa).

Active-site proton acceptor residues include His-167 and Asp-382.

It belongs to the plant acyltransferase family. In terms of tissue distribution, expressed in fruit.

It catalyses the reaction 3-(methylsulfanyl)propanoyl-CoA + butan-1-ol = butyl 3-(methylsulfanyl)propanoate + CoA. The enzyme catalyses ethanol + benzoyl-CoA = ethyl benzoate + CoA. It carries out the reaction butan-1-ol + benzoyl-CoA = butyl benzoate + CoA. The catalysed reaction is 2-(methylsulfanyl)acetyl-CoA + butan-1-ol = butyl 2-(methylsulfanyl)acetate + CoA. Its function is as follows. Involved in the biosynthesis of volatile esters which confer kiwifruit flavor. Alcohol acyl transferase that can use a wide range of alcohols as substrate to produce esters. Exhibits benzoyl-CoA:alcohol O-acyltransferase activity. The sequence is that of Alcohol acyltransferase 16 from Actinidia chinensis var. chinensis (Chinese soft-hair kiwi).